The sequence spans 254 residues: Translation initiation factor 2 subunit alpha (254 aa).

The S1 motif domain maps to 10–81 (GDLVVVKITE…ERKVVDLSLK (72 aa)).

It belongs to the eIF-2-alpha family. Heterotrimer composed of an alpha, a beta and a gamma chain.

Its function is as follows. eIF-2 functions in the early steps of protein synthesis by forming a ternary complex with GTP and initiator tRNA. The polypeptide is Translation initiation factor 2 subunit alpha (Thermoplasma acidophilum (strain ATCC 25905 / DSM 1728 / JCM 9062 / NBRC 15155 / AMRC-C165)).